We begin with the raw amino-acid sequence, 116 residues long: Protein TCL1B1 (116 aa).

It belongs to the TCL1 family.

The chain is Protein TCL1B1 (Tcl1b1) from Mus musculus (Mouse).